A 155-amino-acid chain; its full sequence is MDYRFQRRLAAEILGVGESRIWISPDPELREEIEGAVTKADVRALIKRGVIKVLPEKGNAGHASKVRHLQRRKGRRRGMGRRKGVATARLDPKERWMHRIRKIRRYLRYLRDKQVIDRKTYRRLYMLAKGGTFRDLASLKRYMADRGLVPEEKIR.

A compositionally biased stretch (basic residues) spans valine 66–glycine 84. Positions valine 66–valine 85 are disordered.

Belongs to the eukaryotic ribosomal protein eL19 family. In terms of assembly, part of the 50S ribosomal subunit.

Functionally, binds to the 23S rRNA. This chain is Large ribosomal subunit protein eL19, found in Aeropyrum pernix (strain ATCC 700893 / DSM 11879 / JCM 9820 / NBRC 100138 / K1).